Here is a 1230-residue protein sequence, read N- to C-terminus: Soluble starch synthase 3, chloroplastic/amyloplastic (1230 aa).

Residues 1–60 constitute a chloroplast transit peptide; that stretch reads MDVPFPLHRSLSCTSVSNAITHLKIKPILGFVSHGTTSLSVQSSSWRKDGMVTGVSFSIC. The segment at 66–189 is disordered; that stretch reads RRRRKVSTPR…KDAVKLNKSK (124 aa). Over residues 124-145 the composition is skewed to basic and acidic residues; it reads VEARVETSDDDTKGVVRDHKFL. Polar residues predominate over residues 152-170; it reads NGSTKSISMSPVRVSSQFV. Residues 177-189 show a composition bias toward basic and acidic residues; that stretch reads GDDKDAVKLNKSK. Residue lysine 794 participates in ADP-alpha-D-glucose binding.

The protein belongs to the glycosyltransferase 1 family. Bacterial/plant glycogen synthase subfamily. In terms of tissue distribution, tuber, sink and source leaves.

The protein resides in the plastid. It localises to the chloroplast. Its subcellular location is the amyloplast. It catalyses the reaction [(1-&gt;4)-alpha-D-glucosyl](n) + ADP-alpha-D-glucose = [(1-&gt;4)-alpha-D-glucosyl](n+1) + ADP + H(+). Its pathway is glycan biosynthesis; starch biosynthesis. Functionally, may account for most of the soluble starch synthase activity in the tubers. Contributes only a tiny percentage of the granule-bound activity, but may also contribute to the deposition of transient starch in chloroplasts of leaves. In Solanum tuberosum (Potato), this protein is Soluble starch synthase 3, chloroplastic/amyloplastic (SS3).